Here is a 90-residue protein sequence, read N- to C-terminus: Mucin-like protein 1 (90 aa).

The N-terminal stretch at 1–20 (MKFLAVLVLLGVSIFLVSAQ) is a signal peptide. O-linked (GalNAc...) threonine glycosylation is found at T23, T24, T30, T34, T46, T47, T51, T52, T54, T55, T59, T60, T62, and T63. Low complexity-rich tracts occupy residues 25 to 36 (AAPADTYPATGP) and 44 to 68 (AETT…ASTT). A disordered region spans residues 25 to 68 (AAPADTYPATGPADDEAPDAETTAAATTATTAAPTTATTAASTT). 3 repeat units span residues 46–53 (TTAAATTA), 54–61 (TTAAPTTA), and 62–69 (TTAASTTA). The tract at residues 46–69 (TTAAATTATTAAPTTATTAASTTA) is 3 X 8 AA tandem repeat of T-T-A-A-[APS]-T-T-A. O-linked (GalNAc...) serine glycosylation is present at S66. O-linked (GalNAc...) threonine glycosylation is found at T67 and T68.

In terms of processing, O-glycosylated. Expressed in mammary, salivary glands and prostate. Also detected in lung. Mainly expressed in cancer cell lines of breast origin. Highly expressed in lymph node-positive compared with node-negative tumors. Detected in all lymph node containing metastatic cells.

It localises to the secreted. Its subcellular location is the membrane. Its function is as follows. May play a role as marker for the diagnosis of metastatic breast cancer. In Homo sapiens (Human), this protein is Mucin-like protein 1 (MUCL1).